A 541-amino-acid polypeptide reads, in one-letter code: Atlastin-3 (541 aa).

Residues 1 to 25 (MLSPQRVAAAASRGADDAMESSKPG) form an N-terminal hypervariable region (HVR) region. At 1–445 (MLSPQRVAAA…NVFSTFRTPA (445 aa)) the chain is on the cytoplasmic side. The region spanning 57 to 305 (DLDVVVVSVA…LIPYVLNPSK (249 aa)) is the GB1/RHD3-type G domain. GDP contacts are provided by arginine 70, lysine 71, glycine 72, lysine 73, serine 74, phenylalanine 75, and arginine 109. Aspartate 142 is a binding site for Mg(2+). Positions 213, 214, 272, and 275 each coordinate GDP. The segment at 343 to 434 (MLQATAEANN…YENFCKHNGS (92 aa)) is 3HB (three-helix bundle) domain. Lysine 391 carries the post-translational modification N6-acetyllysine. The helical transmembrane segment at 446–466 (VLFTGIVALYIASGLTGFIGL) threads the bilayer. Glutamate 467 is a topological domain (lumenal). Residues 468 to 488 (VVAQLFNCMVGLLLIALLTWG) form a helical membrane-spanning segment. Residues 489 to 541 (YIRYSGQYRELGGAIDFGAAYVLEQASSHIGNSTQATVRDAVVGRPSMDKKAQ) lie on the Cytoplasmic side of the membrane. Serine 535 is subject to Phosphoserine.

Belongs to the TRAFAC class dynamin-like GTPase superfamily. GB1/RHD3 GTPase family. GB1 subfamily. In terms of assembly, monomeric and homodimeric. The homodimer, transiently formed by two molecules on opposing membranes, is the active form mediating ER membrane fusion. Interacts with ZFYVE27; both proteins are involved in endoplasmic reticulum tubular network organization. Interacts with REEP5; both proteins are involved in endoplasmic reticulum tubular network organization. As to expression, expressed in the central nervous system and in dorsal root ganglia neurons. Expressed in peripheral tissues (at protein level).

Its subcellular location is the endoplasmic reticulum membrane. The catalysed reaction is GTP + H2O = GDP + phosphate + H(+). In terms of biological role, atlastin-3 (ATL3) is a membrane-anchored GTPase that mediates the GTP-dependent fusion of endoplasmic reticulum (ER) membranes, maintaining the continuous ER network. It facilitates the formation of three-way junctions where ER tubules intersect. Two atlastin-3 on neighboring ER tubules bind GTP and form loose homodimers through the GB1/RHD3-type G domains and 3HB regions. Upon GTP hydrolysis, the 3HB regions tighten, pulling the membranes together to drive their fusion. After fusion, the homodimer disassembles upon release of inorganic phosphate (Pi). Subsequently, GDP dissociates, resetting the monomers to a conformation ready for a new fusion cycle. The protein is Atlastin-3 of Homo sapiens (Human).